Reading from the N-terminus, the 246-residue chain is MAGHSKWANIQHRKGRQDAARSKLFSKLSKEITVAAKMGDPDPEKNPRLRLAVKEAKSNSVPKDVIDRAIKKATGGDAENYDEIRYEGYGPNGVAVIVETMTDNKNRTASTVRSTFSKNGGNLGETGSVGFMFERKGEVTYPASVGDADTVMMAAIEAGAEDVESSEDGHVIFCADTDLNEVSNALEAELGESESTKLIWKPTTTTELDLEGMQKLMKLVDALEDDDDVQRVTTNFEASDEVMAQL.

Residues methionine 1–arginine 21 form a disordered region.

This sequence belongs to the TACO1 family.

The protein resides in the cytoplasm. This Ruegeria sp. (strain TM1040) (Silicibacter sp.) protein is Probable transcriptional regulatory protein TM1040_1893.